The primary structure comprises 101 residues: Rho GTPase-activating protein 39 (101 aa).

The region spanning 1 to 96 is the Rho-GAP domain; the sequence is YEQCIAHYES…VLIQHLDTSF (96 aa).

In terms of tissue distribution, preoptic area and testis.

The chain is Rho GTPase-activating protein 39 (Arhgap39) from Rattus norvegicus (Rat).